The primary structure comprises 859 residues: MCGRNQLFVASLLASACLIYCVQYVTVFYGVPVWRNASIPLFCATKNRDTWGTIQCLPDNDDYQEIALNVTEAFDAWNNTVTEQAVEDVWSLFETSIKPCVKLTPLCVAMRCNSTTAKNTTSTPTTTTTANTTIGENSSCIRTDNCTGLGEEEMVDCQFNMTGLERDKKKLYNETWYSKDVVCESNDTKKEKTCYMNHCNTSVITESCDKHYWDTMRFRYCAPPGFALLRCNDTNYSGFEPNCSKVVAATCTRMMETQTSTWFGFNGTRAENRTYIYWHGRDNRTIISLNKFYNLTVHCKRPGNKTVVPITLMSGLVFHSQPINRRPRQAWCWFKGEWKEAMKEVKLTLAKHPRYKGTNDTEKIRFIAPGERSDPEVAYMWTNCRGEFLYCNMTWFLNWVENRTNQTQHNYVPCHIKQIINTWHKVGKNVYLPPREGQLTCNSTVTSIIANIDGGENQTNITFSAEVAELYRLELGDYKLIEVTPIGFAPTPVKRYSSAPVRNKRGVFVLGFLGFLTTAGAAMGAASLTLSAQSRTLLAGIVQQQQQLLDVVKRQQEMLRLTVWGTKNLQARVTAIEKYLKDQAQLNSWGCAFRQVCHTTVPWVNDTLTPDWNNMTWQEWEQRIRNLEANISESLEQAQIQQEKNMYELQKLNSWDVFGNWFDLTSWIKYIQYGVYIVVGIIVLRIVIYVVQMLSRLRKGYRPVFSSPPAYFQQIHIHKDREQPAREETEEDVGNSVGDNWWPWPIRYIHFLIRQLIRLLNRLYNICRDLLSRSFQTLQLISQSLRRALTAVRDWLRFNTAYLQYGGEWIQEAFRAFARATGETLTNAWRGFWGTLGQIGRGILAVPRRIRQGAEIALL.

Positions 1 to 24 (MCGRNQLFVASLLASACLIYCVQY) are cleaved as a signal peptide. Topologically, residues 25 to 673 (VTVFYGVPVW…LTSWIKYIQY (649 aa)) are extracellular. Asn-36 carries N-linked (GlcNAc...) asparagine; by host glycosylation. Cys-43 and Cys-56 are oxidised to a cystine. N-linked (GlcNAc...) asparagine; by host glycans are attached at residues Asn-69, Asn-78, Asn-113, Asn-119, Asn-131, Asn-137, Asn-145, Asn-160, Asn-173, Asn-186, Asn-200, Asn-232, Asn-235, Asn-242, Asn-266, Asn-272, Asn-283, Asn-294, Asn-304, Asn-359, Asn-392, Asn-402, Asn-405, Asn-442, Asn-457, and Asn-460. 5 cysteine pairs are disulfide-bonded: Cys-100–Cys-208, Cys-107–Cys-199, Cys-112–Cys-157, Cys-221–Cys-251, and Cys-231–Cys-243. A V1 region spans residues 112 to 156 (CNSTTAKNTTSTPTTTTTANTTIGENSSCIRTDNCTGLGEEEMVD). Residues 157-199 (CQFNMTGLERDKKKLYNETWYSKDVVCESNDTKKEKTCYMNHC) form a V2 region. The segment at 299-331 (CKRPGNKTVVPITLMSGLVFHSQPINRRPRQAW) is V3. Cys-299 and Cys-332 are oxidised to a cystine. 2 disulfides stabilise this stretch: Cys-384–Cys-441 and Cys-391–Cys-414. Positions 391 to 414 (CNMTWFLNWVENRTNQTQHNYVPC) are V4. The interval 457 to 463 (NQTNITF) is V5. The segment at 506-526 (GVFVLGFLGFLTTAGAAMGAA) is fusion peptide. The interval 569–585 (LQARVTAIEKYLKDQAQ) is immunosuppression. N-linked (GlcNAc...) asparagine; by host glycans are attached at residues Asn-605, Asn-614, and Asn-630. Residues 614–646 (NMTWQEWEQRIRNLEANISESLEQAQIQQEKNM) are a coiled coil. Positions 651-672 (KLNSWDVFGNWFDLTSWIKYIQ) are MPER; binding to GalCer. The helical transmembrane segment at 674–694 (GVYIVVGIIVLRIVIYVVQML) threads the bilayer. The Cytoplasmic portion of the chain corresponds to 695 to 859 (SRLRKGYRPV…IRQGAEIALL (165 aa)). The YXXV motif; contains endocytosis signal signature appears at 701–704 (YRPV). Cys-767 is lipidated: S-palmitoyl cysteine; by host. A Di-leucine internalization motif motif is present at residues 858–859 (LL).

As to quaternary structure, the mature envelope protein (Env) consists of a homotrimer of non-covalently associated gp120-gp41 heterodimers. The resulting complex protrudes from the virus surface as a spike. There seems to be as few as 10 spikes on the average virion. Interacts with human CD4, CCR5 and CXCR4, to form a P4HB/PDI-CD4-CXCR4-gp120 complex. Gp120 also interacts with the C-type lectins CD209/DC-SIGN and CLEC4M/DC-SIGNR (collectively referred to as DC-SIGN(R)). Gp120 and gp41 interact with GalCer. The mature envelope protein (Env) consists of a homotrimer of non-covalently associated gp120-gp41 heterodimers. The resulting complex protrudes from the virus surface as a spike. There seems to be as few as 10 spikes on the average virion. Specific enzymatic cleavages in vivo yield mature proteins. Envelope glycoproteins are synthesized as an inactive precursor that is heavily N-glycosylated and processed likely by host cell furin in the Golgi to yield the mature SU and TM proteins. The cleavage site between SU and TM requires the minimal sequence [KR]-X-[KR]-R. In terms of processing, palmitoylation of the transmembrane protein and of Env polyprotein (prior to its proteolytic cleavage) is essential for their association with host cell membrane lipid rafts. Palmitoylation is therefore required for envelope trafficking to classical lipid rafts, but not for viral replication.

The protein localises to the virion membrane. It is found in the host cell membrane. The protein resides in the host endosome membrane. Functionally, the surface protein gp120 (SU) attaches the virus to the host lymphoid cell by binding to the primary receptor CD4. This interaction induces a structural rearrangement creating a high affinity binding site for a chemokine coreceptor like CXCR4 and/or CCR5. This peculiar 2 stage receptor-interaction strategy allows gp120 to maintain the highly conserved coreceptor-binding site in a cryptic conformation, protected from neutralizing antibodies. Since CD4 also displays a binding site for the disulfide-isomerase P4HB/PDI, a P4HB/PDI-CD4-CXCR4-gp120 complex may form. In that complex, P4HB/PDI could reach and reduce gp120 disulfide bonds, causing major conformational changes in gp120. TXN, another PDI family member could also be involved in disulfide rearrangements in Env during fusion. These changes are transmitted to the transmembrane protein gp41 and are thought to activate its fusogenic potential by unmasking its fusion peptide. The surface protein gp120 is a ligand for CD209/DC-SIGN and CLEC4M/DC-SIGNR, which are respectively found on dendritic cells (DCs), and on endothelial cells of liver sinusoids and lymph node sinuses. These interactions allow capture of viral particles at mucosal surfaces by these cells and subsequent transmission to permissive cells. DCs are professional antigen presenting cells, critical for host immunity by inducing specific immune responses against a broad variety of pathogens. They act as sentinels in various tissues where they take up antigen, process it, and present it to T-cells following migration to lymphoid organs. HIV subverts the migration properties of dendritic cells to gain access to CD4+ T-cells in lymph nodes. Virus transmission to permissive T-cells occurs either in trans (without DCs infection, through viral capture and transmission), or in cis (following DCs productive infection, through the usual CD4-gp120 interaction), thereby inducing a robust infection. In trans infection, bound virions remain infectious over days and it is proposed that they are not degraded, but protected in non-lysosomal acidic organelles within the DCs close to the cell membrane thus contributing to the viral infectious potential during DCs' migration from the periphery to the lymphoid tissues. On arrival at lymphoid tissues, intact virions recycle back to DCs' cell surface allowing virus transmission to CD4+ T-cells. Virion capture also seems to lead to MHC-II-restricted viral antigen presentation, and probably to the activation of HIV-specific CD4+ cells. In terms of biological role, the transmembrane protein gp41 (TM) acts as a class I viral fusion protein. Under the current model, the protein has at least 3 conformational states: pre-fusion native state, pre-hairpin intermediate state, and post-fusion hairpin state. During fusion of viral and target intracellular membranes, the coiled coil regions (heptad repeats) assume a trimer-of-hairpins structure, positioning the fusion peptide in close proximity to the C-terminal region of the ectodomain. The formation of this structure appears to drive apposition and subsequent fusion of viral and target cell membranes. Complete fusion occurs in host cell endosomes and is dynamin-dependent, however some lipid transfer might occur at the plasma membrane. The virus undergoes clathrin-dependent internalization long before endosomal fusion, thus minimizing the surface exposure of conserved viral epitopes during fusion and reducing the efficacy of inhibitors targeting these epitopes. Membranes fusion leads to delivery of the nucleocapsid into the cytoplasm. Its function is as follows. The envelope glycoprotein gp160 precursor down-modulates cell surface CD4 antigen by interacting with it in the endoplasmic reticulum and blocking its transport to the cell surface. Functionally, the gp120-gp41 heterodimer seems to contribute to T-cell depletion during HIV-1 infection. The envelope glycoproteins expressed on the surface of infected cells induce apoptosis through an interaction with uninfected cells expressing the receptor (CD4) and the coreceptors CXCR4 or CCR5. This type of bystander killing may be obtained by at least three distinct mechanisms. First, the interaction between the 2 cells can induce cellular fusion followed by nuclear fusion within the syncytium. Syncytia are condemned to die from apoptosis. Second, the 2 interacting cells may not fuse entirely and simply exchange plasma membrane lipids, after a sort of hemifusion process, followed by rapid death. Third, it is possible that virus-infected cells, on the point of undergoing apoptosis, fuse with CD4-expressing cells, in which case apoptosis is rapidly transmitted from one cell to the other and thus occurs in a sort of contagious fashion. The gp120-gp41 heterodimer allows rapid transcytosis of the virus through CD4 negative cells such as simple epithelial monolayers of the intestinal, rectal and endocervical epithelial barriers. Both gp120 and gp41 specifically recognize glycosphingolipids galactosyl-ceramide (GalCer) or 3' sulfo-galactosyl-ceramide (GalS) present in the lipid rafts structures of epithelial cells. Binding to these alternative receptors allows the rapid transcytosis of the virus through the epithelial cells. This transcytotic vesicle-mediated transport of virions from the apical side to the basolateral side of the epithelial cells does not involve infection of the cells themselves. This Homo sapiens (Human) protein is Envelope glycoprotein gp160 (env).